A 572-amino-acid polypeptide reads, in one-letter code: 2-isopropylmalate synthase (572 aa).

A Pyruvate carboxyltransferase domain is found at 39–313 (PVWMSTDLRD…HPGLDFSRIN (275 aa)). Mg(2+) contacts are provided by Asp-48, His-252, His-254, and Asn-288. The segment at 445 to 572 (VAAPYAYVEH…GVGRQVAATR (128 aa)) is regulatory domain.

It belongs to the alpha-IPM synthase/homocitrate synthase family. LeuA type 2 subfamily. As to quaternary structure, homodimer. Requires Mg(2+) as cofactor.

Its subcellular location is the cytoplasm. The enzyme catalyses 3-methyl-2-oxobutanoate + acetyl-CoA + H2O = (2S)-2-isopropylmalate + CoA + H(+). The protein operates within amino-acid biosynthesis; L-leucine biosynthesis; L-leucine from 3-methyl-2-oxobutanoate: step 1/4. Catalyzes the condensation of the acetyl group of acetyl-CoA with 3-methyl-2-oxobutanoate (2-ketoisovalerate) to form 3-carboxy-3-hydroxy-4-methylpentanoate (2-isopropylmalate). The protein is 2-isopropylmalate synthase of Azoarcus sp. (strain BH72).